Here is a 360-residue protein sequence, read N- to C-terminus: Peptide chain release factor 1 (360 aa).

Q235 carries the post-translational modification N5-methylglutamine.

The protein belongs to the prokaryotic/mitochondrial release factor family. In terms of processing, methylated by PrmC. Methylation increases the termination efficiency of RF1.

The protein resides in the cytoplasm. Peptide chain release factor 1 directs the termination of translation in response to the peptide chain termination codons UAG and UAA. The protein is Peptide chain release factor 1 of Burkholderia cenocepacia (strain HI2424).